Reading from the N-terminus, the 1099-residue chain is MSLTEGAHTKWGVLKQKLGPQDPDQIEGNLENADPELCIRLLQIPSVVNYSGLKKRLESSDDEWMCQFLELSGLDLLLEALDRLSGRGVARIADALLQLTCINCVRTLMNSHKGIEYIVNNEGYVRKLSQALDTSNVMVKKQVFELLAALCIYSPEGHALCLDALEHYKVVKNQQYRFSVITNELSSSDNVPYMVTLLSVINAIIFGTEELRNRVQLRNEFIGLQLLDLLTKLRDLEDEDLLIQALVFEEAKSEDEEELLKIYGGINMNNHQEVFSTLFNKVSCSPLSVQLLSILQGLLQLDQSHPTSPLLWEALEVLVNRAVLLADDCQNNNVEEVMDRLVTSKKLSSKEKRKTDKCTNKVNKSIQTDKPKEESCEGKTVKKDPVSSGIPADSLQLLDALLAPPTKEDSPACITPLHTHLSGELTCSSVLPSPPSPLVPNADERISSSSSPLPPPPPPLPGTELSPPPPGMVALSLPPPPPPLPGMGGMLPPPPPPLPGMGGMLPTPPPPPLPGMGGMLPPPPPPLPGMGGMLPPPPPPLPGMGGMLPPPPPPLPGMGGMLPPPPPLPGMGGMLPPPPPPLPGMGGMPPPPPPMPGMGTFTDEVVVARVDYSLGYLPKAFLKVNKPTLKMKKLNWQKIPPNVIKDSHSMWASASSIEDTVEPNYSSIEQLFCLPQAAVKESAVPVKKPPKEITFLDSKKNLNLNIFLKQFKCPNKEVIELIEKGDRSRFDIEILKQFLKLLPEKHEVENLKSYQEDKAKLSNADQFYLLLLGVPCYQLRIECMLICEEINLMIDMIRPRAKVVSSACDDIISSHRLPLFCQLILKVGNFLNYGSHTGNANGFKISTLLKLTETRANQTRITLLHHILEEIEHNHTDLLQLPTDLENVSTVAGINIENMYTETSGNLKKLRDLQNKISTAATDVKEQYEKSIQDCMDTLKELEEQLTDISQKKVKLADYLCEDPTKLSLEETFSTMKAFRELFLKAKKDNKDRKEQAVKAEKRKQQIADEETKRQKGENGKIIRKGAAKLEEGCIIDDLLADIKKGFQLRKTAKTKTKADACPKTLSSETNRTDIQHVGKRPEVPPVHPQRKIIILKRQ.

Positions M1–Q330 constitute a GBD/FH3 domain. Composition is skewed to basic and acidic residues over residues S348–T359 and Q367–P385. Disordered stretches follow at residues S348–P391, P432–P509, and A1000–N1019. The FH1 domain occupies T426 to P569. A compositionally biased stretch (pro residues) spans P452–P499. Positions F621 to D1009 constitute an FH2 domain. Residues L907–N1019 are a coiled coil. The 16-residue stretch at D1037–T1052 folds into the WH2 domain. The tract at residues K1064 to P1085 is disordered. Basic and acidic residues predominate over residues N1071 to E1083.

This sequence belongs to the formin homology family.

In Xenopus laevis (African clawed frog), this protein is Inverted formin-2 (inf2).